The sequence spans 753 residues: MSTRTPLPTVNERDTENHTSHGDGRQEVTSRTSRSGARCRNSIASCADEQPHIGNYRLLKTIGKGNFAKVKLARHILTGREVAIKIIDKTQLNPTSLQKLFREVRIMKILNHPNIVKLFEVIETEKTLYLIMEYASGGEVFDYLVAHGRMKEKEARSKFRQIVSAVQYCHQKRIVHRDLKAENLLLDADMNIKIADFGFSNEFTVGGKLDTFCGSPPYAAPELFQGKKYDGPEVDVWSLGVILYTLVSGSLPFDGQNLKELRERVLRGKYRIPFYMSTDCENLLKRFLVLNPIKRGTLEQIMKDRWINAGHEEDELKPFVEPELDISDQKRIDIMVGMGYSQEEIQESLSKMKYDEITATYLLLGRKSSELDASDSSSSSNLSLAKVRPSSDLNNSTGQSPHHKVQRSVSSSQKQRRYSDHAGPAIPSVVAYPKRSQTSTADSDLKEDGISSRKSSGSAVGGKGIAPASPMLGNASNPNKADIPERKKSSTVPSSNTASGGMTRRNTYVCSERTTADRHSVIQNGKENSTIPDQRTPVASTHSISSAATPDRIRFPRGTASRSTFHGQPRERRTATYNGPPASPSLSHEATPLSQTRSRGSTNLFSKLTSKLTRRNMSFRFIKRLPTEYERNGRYEGSSRNVSAEQKDENKEAKPRSLRFTWSMKTTSSMDPGDMMREIRKVLDANNCDYEQRERFLLFCVHGDGHAENLVQWEMEVCKLPRLSLNGVRFKRISGTSIAFKNIASKIANELKL.

The disordered stretch occupies residues 1-36; the sequence is MSTRTPLPTVNERDTENHTSHGDGRQEVTSRTSRSG. A compositionally biased stretch (basic and acidic residues) spans 11–28; it reads NERDTENHTSHGDGRQEV. Ser42 carries the phosphoserine modification. One can recognise a Protein kinase domain in the interval 56–307; that stretch reads YRLLKTIGKG…LEQIMKDRWI (252 aa). ATP is bound by residues 62-70 and Lys85; that span reads IGKGNFAKV. Residue Asp178 is the Proton acceptor of the active site. Position 211 is a phosphothreonine; by LKB1 (Thr211). In terms of domain architecture, UBA spans 326–365; sequence ISDQKRIDIMVGMGYSQEEIQESLSKMKYDEITATYLLLG. A phosphoserine mark is found at Ser368, Ser374, Ser376, Ser380, Ser383, Leu384, Ser400, Arg407, Ser419, and Ser469. The segment at 370–600 is disordered; sequence ELDASDSSSS…TPLSQTRSRG (231 aa). A compositionally biased stretch (low complexity) spans 374-385; sequence SDSSSSSNLSLA. Over residues 391–400 the composition is skewed to polar residues; sequence SDLNNSTGQS. Composition is skewed to polar residues over residues 490-513 and 521-548; these read STVP…CSER and VIQN…SSAA. Phosphoserine is present on residues Ser540 and Ser543. Thr549 is modified (phosphothreonine). Thr564 is subject to Phosphothreonine; by PKC/PRKCZ. Ser583, Ser598, Ser601, and Ser643 each carry phosphoserine. Polar residues predominate over residues 584–600; sequence PSLSHEATPLSQTRSRG. A disordered region spans residues 632–655; sequence NGRYEGSSRNVSAEQKDENKEAKP. The span at 645 to 655 shows a compositional bias: basic and acidic residues; that stretch reads EQKDENKEAKP. In terms of domain architecture, KA1 spans 704-753; sequence DGHAENLVQWEMEVCKLPRLSLNGVRFKRISGTSIAFKNIASKIANELKL.

This sequence belongs to the protein kinase superfamily. CAMK Ser/Thr protein kinase family. SNF1 subfamily. Interacts with MAPT/TAU. Interacts with DLG5 (via coiled-coil domain). Interacts with STK3/MST2 and STK4/MST1 in the presence of DLG5. Interacts with YWHAB, YWHAG, YWHAQ and YWHAZ. Interacts with PKP2 (via N-terminus). Interacts with CDC25C. Interacts with KSR1. Post-translationally, phosphorylated at Thr-211 by STK11/LKB1 in complex with STE20-related adapter-alpha (STRADA) pseudo kinase and CAB39. Phosphorylation at Thr-564 by PRKCZ/aPKC inhibits the kinase activity. In terms of tissue distribution, ubiquitous.

It localises to the cell membrane. The protein localises to the cell projection. Its subcellular location is the dendrite. The protein resides in the cytoplasm. The enzyme catalyses L-seryl-[protein] + ATP = O-phospho-L-seryl-[protein] + ADP + H(+). It catalyses the reaction L-threonyl-[protein] + ATP = O-phospho-L-threonyl-[protein] + ADP + H(+). Activated by phosphorylation on Thr-211. Inhibited by phosphorylation on Thr-564. Serine/threonine-protein kinase. Involved in the specific phosphorylation of microtubule-associated proteins for MAP2 and MAP4. Phosphorylates the microtubule-associated protein MAPT/TAU. Phosphorylates CDC25C on 'Ser-216'. Regulates localization and activity of some histone deacetylases by mediating phosphorylation of HDAC7, promoting subsequent interaction between HDAC7 and 14-3-3 and export from the nucleus. Regulates localization and activity of MITF by mediating its phosphorylation, promoting subsequent interaction between MITF and 14-3-3 and retention in the cytosol. Negatively regulates the Hippo signaling pathway and antagonizes the phosphorylation of LATS1. Cooperates with DLG5 to inhibit the kinase activity of STK3/MST2 toward LATS1. Phosphorylates PKP2 and KSR1. This Homo sapiens (Human) protein is MAP/microtubule affinity-regulating kinase 3 (MARK3).